We begin with the raw amino-acid sequence, 119 residues long: Dihydroneopterin aldolase (119 aa).

Residues Glu-21, Tyr-53, and 72-73 each bind substrate; that span reads IE. The active-site Proton donor/acceptor is Lys-99.

This sequence belongs to the DHNA family.

The enzyme catalyses 7,8-dihydroneopterin = 6-hydroxymethyl-7,8-dihydropterin + glycolaldehyde. It functions in the pathway cofactor biosynthesis; tetrahydrofolate biosynthesis; 2-amino-4-hydroxy-6-hydroxymethyl-7,8-dihydropteridine diphosphate from 7,8-dihydroneopterin triphosphate: step 3/4. Its function is as follows. Catalyzes the conversion of 7,8-dihydroneopterin to 6-hydroxymethyl-7,8-dihydropterin. This Streptococcus pyogenes serotype M3 (strain ATCC BAA-595 / MGAS315) protein is Dihydroneopterin aldolase (folB).